The chain runs to 213 residues: Ribosome maturation factor RimM (213 aa).

One can recognise a PRC barrel domain in the interval 99–175 (DQDAAYISDL…RITMRLPEGL (77 aa)). Positions 182–213 (TATAREPRARRTRKRGLRKPITGADATPPDSQ) are disordered. Basic residues predominate over residues 189–199 (RARRTRKRGLR).

Belongs to the RimM family. Binds ribosomal protein uS19.

Its subcellular location is the cytoplasm. Its function is as follows. An accessory protein needed during the final step in the assembly of 30S ribosomal subunit, possibly for assembly of the head region. Essential for efficient processing of 16S rRNA. May be needed both before and after RbfA during the maturation of 16S rRNA. It has affinity for free ribosomal 30S subunits but not for 70S ribosomes. This Acidobacterium capsulatum (strain ATCC 51196 / DSM 11244 / BCRC 80197 / JCM 7670 / NBRC 15755 / NCIMB 13165 / 161) protein is Ribosome maturation factor RimM.